The following is a 175-amino-acid chain: Crossover junction endodeoxyribonuclease RuvC (175 aa).

Active-site residues include aspartate 8, glutamate 68, and aspartate 140. 3 residues coordinate Mg(2+): aspartate 8, glutamate 68, and aspartate 140.

This sequence belongs to the RuvC family. Homodimer which binds Holliday junction (HJ) DNA. The HJ becomes 2-fold symmetrical on binding to RuvC with unstacked arms; it has a different conformation from HJ DNA in complex with RuvA. In the full resolvosome a probable DNA-RuvA(4)-RuvB(12)-RuvC(2) complex forms which resolves the HJ. The cofactor is Mg(2+).

The protein resides in the cytoplasm. The enzyme catalyses Endonucleolytic cleavage at a junction such as a reciprocal single-stranded crossover between two homologous DNA duplexes (Holliday junction).. In terms of biological role, the RuvA-RuvB-RuvC complex processes Holliday junction (HJ) DNA during genetic recombination and DNA repair. Endonuclease that resolves HJ intermediates. Cleaves cruciform DNA by making single-stranded nicks across the HJ at symmetrical positions within the homologous arms, yielding a 5'-phosphate and a 3'-hydroxyl group; requires a central core of homology in the junction. The consensus cleavage sequence is 5'-(A/T)TT(C/G)-3'. Cleavage occurs on the 3'-side of the TT dinucleotide at the point of strand exchange. HJ branch migration catalyzed by RuvA-RuvB allows RuvC to scan DNA until it finds its consensus sequence, where it cleaves and resolves the cruciform DNA. In Pseudomonas fluorescens (strain Pf0-1), this protein is Crossover junction endodeoxyribonuclease RuvC.